Here is an 876-residue protein sequence, read N- to C-terminus: Alanine--tRNA ligase (876 aa).

H564, H568, C666, and H670 together coordinate Zn(2+).

The protein belongs to the class-II aminoacyl-tRNA synthetase family. The cofactor is Zn(2+).

The protein resides in the cytoplasm. It carries out the reaction tRNA(Ala) + L-alanine + ATP = L-alanyl-tRNA(Ala) + AMP + diphosphate. Functionally, catalyzes the attachment of alanine to tRNA(Ala) in a two-step reaction: alanine is first activated by ATP to form Ala-AMP and then transferred to the acceptor end of tRNA(Ala). Also edits incorrectly charged Ser-tRNA(Ala) and Gly-tRNA(Ala) via its editing domain. The polypeptide is Alanine--tRNA ligase (Colwellia psychrerythraea (strain 34H / ATCC BAA-681) (Vibrio psychroerythus)).